A 543-amino-acid chain; its full sequence is MAHLLTNSPIGLLGRWLSGGRLLPPTEQQPGFQLPPPYRLAATRTQPQQQQEQEQEQEQAKPATRPPWNEPQITAEGAIQVGWYSSTDPDNPQNWSFGAKLLVYLEVNLITFMVYMSVAIFSAAEGEFRTVFGVSRSVTELGMSLYVLGYGTGPMIWSPLSEIPSVGRNPPYVVSVTIFLLLSIPTAVVNNVPGFLILRFLQGFFGSPGLATGGASIADVTGLTHLPYGLYVWAVCSIAGPAVAPVIAGFSVPVKGWHWSMWEVLWAAGGCFVFLLFLPETSGPAILHLRAQRLRALTGNPAFQSQSEIAVRDARPTQIVYDALVIPWKINALDPAILFTTVYIGLVYAIFYSYFEVLPRVYITMHAMTLGQLGLIFLGAIVGTLLVLPGYFAFTHWSLNADFRRGVWPRPEKRLVPALCGSVLVPVGLFLFAWTARPDLHWVVPTVGLVLEVAGMSLVIQCVFSYVAVAYLRYSASLFAINDLARAYLAFAAIMWSDPLYDRLGVARGTTLLAGLTVGCVGGMFTLYWWGPALRKRSRFASD.

The tract at residues 24 to 71 is disordered; that stretch reads PPTEQQPGFQLPPPYRLAATRTQPQQQQEQEQEQEQAKPATRPPWNEP. Asn94 carries an N-linked (GlcNAc...) asparagine glycan. A run of 12 helical transmembrane segments spans residues 101–121, 141–161, 178–198, 203–223, 230–250, 259–279, 335–355, 374–394, 415–435, 440–460, 476–496, and 512–532; these read LLVY…VAIF, LGMS…SPLS, IFLL…FLIL, GFFG…VTGL, LYVW…IAGF, WSMW…LFLP, PAIL…YSYF, GLIF…YFAF, LVPA…FAWT, LHWV…SLVI, ASLF…AIMW, and LLAG…WWGP.

This sequence belongs to the major facilitator superfamily. CAR1 family.

Its subcellular location is the cell membrane. Its function is as follows. MFS-type transporter; part of the gene cluster that mediates the biosynthesis of pyranoviolin A, a pyranonigrin analog with a C-3 methoxy group. May be involved in the secretion of pyranoviolin A. This chain is MFS-type transporter pyvG, found in Aspergillus violaceofuscus (strain CBS 115571).